The chain runs to 1048 residues: Self-sufficient cytochrome P450 monooxygenase CYP505E4 (1048 aa).

Cysteine 405 contacts heme. The region spanning 499 to 640 (VSFFYGSNSG…DLEVWEETNL (142 aa)) is the Flavodoxin-like domain. Residues 505–509 (SNSGT) and 584–616 (VFGCGHQDWTKTFYRIPILIDNLMYKAGATRLA) contribute to the FMN site. One can recognise an FAD-binding FR-type domain in the interval 678 to 906 (RDLIEAKVTA…RPAKDAFHLP (229 aa)).

In the N-terminal section; belongs to the cytochrome P450 family. Requires FAD as cofactor. FMN is required as a cofactor. It depends on heme as a cofactor.

It catalyses the reaction 2 oxidized [cytochrome P450] + NADPH = 2 reduced [cytochrome P450] + NADP(+) + H(+). The catalysed reaction is an organic molecule + reduced [NADPH--hemoprotein reductase] + O2 = an alcohol + oxidized [NADPH--hemoprotein reductase] + H2O + H(+). It carries out the reaction dodecanoate + reduced [NADPH--hemoprotein reductase] + O2 = 5-hydroxydodecanoate + oxidized [NADPH--hemoprotein reductase] + H2O + H(+). The enzyme catalyses tetradecanoate + reduced [NADPH--hemoprotein reductase] + O2 = 7-hydroxytetradecanoate + oxidized [NADPH--hemoprotein reductase] + H2O + H(+). It catalyses the reaction dodecan-1-ol + reduced [NADPH--hemoprotein reductase] + O2 = 1,5-dodecanediol + oxidized [NADPH--hemoprotein reductase] + H2O + H(+). The catalysed reaction is dodecan-1-ol + reduced [NADPH--hemoprotein reductase] + O2 = 1,4-dodecanediol + oxidized [NADPH--hemoprotein reductase] + H2O + H(+). It carries out the reaction dodecan-1-ol + reduced [NADPH--hemoprotein reductase] + O2 = 1,6-dodecanediol + oxidized [NADPH--hemoprotein reductase] + H2O + H(+). Self-sufficient cytochrome P450 monooxygenase that catalyzes the regioselective in-chain hydroxylation of alkanes, fatty alcohols, and fatty acids at the omega-7 position. Performs hydroxylation of C10-C16 n-alkanes and C12 and C14 fatty alcohols; and thereby enables the one step biocatalytic synthesis of rare alcohols such as 5-dodecanol and 7-tetradecanol. Converts 1-dodecanol into 1,5-dodecanediol as major product with very little sub-terminally hydroxylated products with the 1,4-dodecanediol and 1,6-dodecanediol more abundant. Converts dodecanoic acid to 5-hydroxydodecanoic acid which can be further converted into delta-dodecalactone by lactonization of the 5-hydroxy acid at low pH. Also gives sub-terminal hydroxylation of dodecanoic acid with 9-hydroxydodecanoic acid being the second most abundant product. The sequence is that of Self-sufficient cytochrome P450 monooxygenase CYP505E4 from Penicillium expansum (Blue mold rot fungus).